We begin with the raw amino-acid sequence, 562 residues long: 3-(3-hydroxy-phenyl)propionate/3-hydroxycinnamic acid hydroxylase (562 aa).

FAD contacts are provided by residues 8–37 (DVVIVGAGPVGLTLANILGGQGVRTLIIEE) and 275–285 (FRKGRMLLAGD).

The protein belongs to the PheA/TfdB FAD monooxygenase family. It depends on FAD as a cofactor.

It catalyses the reaction 3-(3-hydroxyphenyl)propanoate + NADH + O2 + H(+) = 3-(2,3-dihydroxyphenyl)propanoate + NAD(+) + H2O. It carries out the reaction (2E)-3-(3-hydroxyphenyl)prop-2-enoate + NADH + O2 + H(+) = (2E)-3-(2,3-dihydroxyphenyl)prop-2-enoate + NAD(+) + H2O. It participates in aromatic compound metabolism; 3-phenylpropanoate degradation. In terms of biological role, catalyzes the insertion of one atom of molecular oxygen into position 2 of the phenyl ring of 3-(3-hydroxyphenyl)propionate (3-HPP) and hydroxycinnamic acid (3HCI). The protein is 3-(3-hydroxy-phenyl)propionate/3-hydroxycinnamic acid hydroxylase of Mycolicibacterium smegmatis (strain ATCC 700084 / mc(2)155) (Mycobacterium smegmatis).